The following is a 290-amino-acid chain: Programmed cell death 1 ligand 1 (290 aa).

The signal sequence occupies residues M1–A18. The 109-residue stretch at F19–T127 folds into the Ig-like V-type domain. Residues F19–H239 are Extracellular-facing. The N-linked (GlcNAc...) asparagine glycan is linked to N35. 2 disulfide bridges follow: C40–C114 and C154–C208. The 92-residue stretch at P133 to I224 folds into the Ig-like C2-type domain. 4 N-linked (GlcNAc...) asparagine glycosylation sites follow: N191, N199, N218, and N236. Residues W240–L260 traverse the membrane as a helical segment. Residues R261–T290 lie on the Cytoplasmic side of the membrane.

The protein belongs to the immunoglobulin superfamily. BTN/MOG family. As to quaternary structure, interacts with PDCD1. Interacts with CMTM4 and CMTM6. Interacts with CD80. Post-translationally, ubiquitinated; STUB1 likely mediates polyubiquitination of PD-L1/CD274 triggering its degradation. Ubiquitinated by MARCHF8; leading to degradation. Deubiquitinated by USP22; leading to stabilization. In terms of tissue distribution, highly expressed in the heart, thymus, skeletal muscle, and lung. Weakly expressed in the kidney, spleen, thyroid, and liver. Expressed on activated dendritic cells, B-cells and macrophages. Expressed in numerous tumor cells lines of lymphoid origin.

The protein resides in the cell membrane. Its subcellular location is the early endosome membrane. It localises to the recycling endosome membrane. In terms of biological role, plays a critical role in induction and maintenance of immune tolerance to self. As a ligand for the inhibitory receptor PDCD1/PD-1, modulates the activation threshold of T-cells and limits T-cell effector response. Through a yet unknown activating receptor, may costimulate T-cell subsets that predominantly produce interleukin-10 (IL10). The PDCD1-mediated inhibitory pathway is exploited by tumors to attenuate anti-tumor immunity and escape destruction by the immune system, thereby facilitating tumor survival. The interaction with PDCD1/PD-1 inhibits cytotoxic T lymphocytes (CTLs) effector function. The blockage of the PDCD1-mediated pathway results in the reversal of the exhausted T-cell phenotype and the normalization of the anti-tumor response, providing a rationale for cancer immunotherapy. The polypeptide is Programmed cell death 1 ligand 1 (Cd274) (Mus musculus (Mouse)).